The sequence spans 207 residues: Glycerol-3-phosphate acyltransferase (207 aa).

The next 6 helical transmembrane spans lie at 8–28 (NIVFYLLAYLIGSIPFGLILA), 64–84 (LGIATVLLDALKGTLVLLVGI), 92–112 (TLWAIAVLAVLGHCYSIYLGL), 122–142 (LGVYIVLIPYSTLIGAVVWIV), 154–174 (SLLGLIAAVISAIFIYNGLGI), and 176–196 (SNIPMYLIAFIILYKHIPNIV).

Belongs to the PlsY family. As to quaternary structure, probably interacts with PlsX.

It localises to the cell inner membrane. The enzyme catalyses an acyl phosphate + sn-glycerol 3-phosphate = a 1-acyl-sn-glycero-3-phosphate + phosphate. It participates in lipid metabolism; phospholipid metabolism. Its function is as follows. Catalyzes the transfer of an acyl group from acyl-phosphate (acyl-PO(4)) to glycerol-3-phosphate (G3P) to form lysophosphatidic acid (LPA). This enzyme utilizes acyl-phosphate as fatty acyl donor, but not acyl-CoA or acyl-ACP. In Aliarcobacter butzleri (strain RM4018) (Arcobacter butzleri), this protein is Glycerol-3-phosphate acyltransferase.